Here is a 926-residue protein sequence, read N- to C-terminus: Coatomer subunit beta'-2 (926 aa).

WD repeat units follow at residues Gln13–Ser52, Val55–Val94, Ala97–Gln136, Gly140–Thr180, Ala183–Thr224, Gly227–Thr266, Tyr269–Asp309, Thr351–Gly390, and Arg461–Asp501. The interval Glu847–Ala926 is disordered. The segment covering Asn868–Lys887 has biased composition (basic and acidic residues). Acidic residues predominate over residues Glu888–Ser900. The segment covering Gly917–Ala926 has biased composition (polar residues).

This sequence belongs to the WD repeat COPB2 family. As to quaternary structure, oligomeric complex that consists of at least the alpha, beta, beta', gamma, delta, epsilon and zeta subunits.

The protein resides in the cytoplasm. Its subcellular location is the golgi apparatus membrane. It localises to the cytoplasmic vesicle. It is found in the COPI-coated vesicle membrane. Functionally, the coatomer is a cytosolic protein complex that binds to dilysine motifs and reversibly associates with Golgi non-clathrin-coated vesicles, which further mediate biosynthetic protein transport from the ER, via the Golgi up to the trans Golgi network. Coatomer complex is required for budding from Golgi membranes, and is essential for the retrograde Golgi-to-ER transport of dilysine-tagged proteins. This Arabidopsis thaliana (Mouse-ear cress) protein is Coatomer subunit beta'-2.